Consider the following 910-residue polypeptide: DNA mismatch repair protein MutS (910 aa).

Positions 1–11 (MEAKVEEKEPE) are enriched in basic and acidic residues. The tract at residues 1 to 21 (MEAKVEEKEPEPVENAGPDAP) is disordered. 658–665 (GPNMGGKS) lines the ATP pocket.

This sequence belongs to the DNA mismatch repair MutS family.

In terms of biological role, this protein is involved in the repair of mismatches in DNA. It is possible that it carries out the mismatch recognition step. This protein has a weak ATPase activity. The sequence is that of DNA mismatch repair protein MutS from Brucella melitensis biotype 1 (strain ATCC 23456 / CCUG 17765 / NCTC 10094 / 16M).